The primary structure comprises 118 residues: Large ribosomal subunit protein bL19 (118 aa).

The protein belongs to the bacterial ribosomal protein bL19 family.

Functionally, this protein is located at the 30S-50S ribosomal subunit interface and may play a role in the structure and function of the aminoacyl-tRNA binding site. The polypeptide is Large ribosomal subunit protein bL19 (Alcanivorax borkumensis (strain ATCC 700651 / DSM 11573 / NCIMB 13689 / SK2)).